A 716-amino-acid chain; its full sequence is Phosphoribosylformylglycinamidine synthase subunit PurL (716 aa).

H34 is a catalytic residue. Y37 is a binding site for ATP. E78 contributes to the Mg(2+) binding site. Residues 79-82 (SHNH) and R101 contribute to the substrate site. Catalysis depends on H80, which acts as the Proton acceptor. A Mg(2+)-binding site is contributed by D102. Q226 is a binding site for substrate. Position 254 (D254) interacts with Mg(2+). 298 to 300 (ESQ) provides a ligand contact to substrate. Residues D474 and G511 each coordinate ATP. Residue N512 participates in Mg(2+) binding. Residue S514 participates in substrate binding.

This sequence belongs to the FGAMS family. Monomer. Part of the FGAM synthase complex composed of 1 PurL, 1 PurQ and 2 PurS subunits.

The protein resides in the cytoplasm. It carries out the reaction N(2)-formyl-N(1)-(5-phospho-beta-D-ribosyl)glycinamide + L-glutamine + ATP + H2O = 2-formamido-N(1)-(5-O-phospho-beta-D-ribosyl)acetamidine + L-glutamate + ADP + phosphate + H(+). The protein operates within purine metabolism; IMP biosynthesis via de novo pathway; 5-amino-1-(5-phospho-D-ribosyl)imidazole from N(2)-formyl-N(1)-(5-phospho-D-ribosyl)glycinamide: step 1/2. Functionally, part of the phosphoribosylformylglycinamidine synthase complex involved in the purines biosynthetic pathway. Catalyzes the ATP-dependent conversion of formylglycinamide ribonucleotide (FGAR) and glutamine to yield formylglycinamidine ribonucleotide (FGAM) and glutamate. The FGAM synthase complex is composed of three subunits. PurQ produces an ammonia molecule by converting glutamine to glutamate. PurL transfers the ammonia molecule to FGAR to form FGAM in an ATP-dependent manner. PurS interacts with PurQ and PurL and is thought to assist in the transfer of the ammonia molecule from PurQ to PurL. The protein is Phosphoribosylformylglycinamidine synthase subunit PurL of Methanobrevibacter smithii (strain ATCC 35061 / DSM 861 / OCM 144 / PS).